Reading from the N-terminus, the 325-residue chain is LIM and senescent cell antigen-like-containing domain protein 1 (325 aa).

Position 2 is an N-acetylalanine (alanine 2). 5 LIM zinc-binding domains span residues 10 to 62 (CERC…CEHD), 71 to 121 (CHQC…CRPC), 135 to 184 (CQKC…CLPC), 193 to 243 (CGAC…CETH), and 252 to 303 (CFHC…CKKC).

In terms of assembly, component of the heterotrimeric IPP (ILK-PINCH-PARVIN) complex composed of ILK, LIMS1/PINCH and PARVA; the complex binds to F-actin via the C-terminal tail of LIMS1 and the N-terminal region of PARVA, promoting F-actin filament bundling. Formation of the IPP complex is dependent on protein kinase C and precedes integrin-mediated cell adhesion and spreading. Competes with LIMS2 for interaction with ILK. Interacts (via LIM zinc-binding 5) with TGFB1I1. Interacts with SH3/SH2 adapter NCK2, thereby linking the complex to cell surface receptors. In terms of tissue distribution, expressed in most tissues except in the brain.

The protein resides in the cell junction. It localises to the focal adhesion. Its subcellular location is the cell membrane. In terms of biological role, within the IPP (ILK-PINCH-PARVIN) complex, binds to F-actin, promoting F-actin bundling, a process required to generate force for actin cytoskeleton reorganization and subsequent dynamic cell adhesion events such as cell spreading and migration. The protein is LIM and senescent cell antigen-like-containing domain protein 1 (LIMS1) of Homo sapiens (Human).